Consider the following 241-residue polypeptide: Meiotically up-regulated gene 130 protein (241 aa).

It is found in the mitochondrion. In terms of biological role, has a role in meiosis. This Schizosaccharomyces pombe (strain 972 / ATCC 24843) (Fission yeast) protein is Meiotically up-regulated gene 130 protein (mug130).